Reading from the N-terminus, the 120-residue chain is Holo-[acyl-carrier-protein] synthase (120 aa).

Asp-8 and Glu-60 together coordinate Mg(2+).

It belongs to the P-Pant transferase superfamily. AcpS family. Mg(2+) is required as a cofactor.

The protein localises to the cytoplasm. The catalysed reaction is apo-[ACP] + CoA = holo-[ACP] + adenosine 3',5'-bisphosphate + H(+). In terms of biological role, transfers the 4'-phosphopantetheine moiety from coenzyme A to a Ser of acyl-carrier-protein. This chain is Holo-[acyl-carrier-protein] synthase, found in Anaplasma marginale (strain Florida).